Reading from the N-terminus, the 280-residue chain is Band 7 protein AGAP004871 (280 aa).

The chain crosses the membrane as a helical span at residues 23–43 (ILIFLSWVLVVLTMPFSLLVC).

Belongs to the band 7/mec-2 family.

Its subcellular location is the membrane. This Anopheles gambiae (African malaria mosquito) protein is Band 7 protein AGAP004871.